The sequence spans 324 residues: Disintegrin-like/cysteine-rich protein MPIII-3 (324 aa).

Positions 1–20 are cleaved as a signal peptide; it reads MIQVLLVIICLAVFPYQVSS. The propeptide at 21 to 173 is or 174 (in a minor form); sequence IILESGNINN…DEDPKKCEFR (153 aa). One can recognise a Disintegrin; truncated domain in the interval 168–207; sequence KKCEFRRAGTECRPARSECDVAEYCTGQSAECPTDVFHSN. The tract at residues 179–192 is inhibits platelet aggregation; that stretch reads CRPARSECDVAEYC. Cystine bridges form between cysteine 179–cysteine 199, cysteine 186–cysteine 218, cysteine 192–cysteine 199, cysteine 211–cysteine 223, cysteine 230–cysteine 280, cysteine 245–cysteine 287, cysteine 258–cysteine 268, cysteine 275–cysteine 312, and cysteine 306–cysteine 317. The D/ECD-tripeptide signature appears at 185–187; it reads ECD. Positions 187 and 190 each coordinate Ca(2+). Positions 202 and 203 each coordinate Ca(2+). N-linked (GlcNAc...) asparagine glycosylation occurs at asparagine 237.

It belongs to the venom metalloproteinase (M12B) family. P-III subfamily. P-IIIe sub-subfamily. Monomer. Is able to form a homodimer. In terms of processing, N-glycosylated. Exists in at least six differently N-glycosylated forms. The glycans likely have a stabilizing purpose. Post-translationally, cys-199 forms a disulfide bond with Cys-192 in 90% and with Cys-179 in 10% of the protein molecules; alternative disulfide bonds may have a major effect on the conformation of the protein. In terms of tissue distribution, expressed by the venom gland (at protein level). Expressed by the venom gland.

Its subcellular location is the secreted. Its activity is regulated as follows. Activity may be regulated by the intramolecular thiol-disulfide exchange or disulfide bond switching. Functionally, abolishes platelet aggregation induced by collagen, ADP (IC(50)=292 nM) and arachidonic-acid. The inhibition of collagen-induced platelet aggregation may be due to its ability to bind collagen and block the binding site on collagen for platelets and/or to its ability to bind to the platelet alpha-2/beta-1 collagen receptor (ITGA2/ITGB1) to block its interaction with collagen and hence prevent platelet stimulation. The inhibition of ADP- or arachidonic-acid-induced platelet aggregation may be due to it acting as an antagonist of the ADP receptors or thromboxane-prostanoid receptors of the platelets, respectively. Does not interact with integrins alpha-IIb (ITGA2B) or beta-3 (ITGB3) nor platelet glycoproteins VI (GP6) or IX (GP9) in vitro, however, the detection is dependent on experimental conditions and may happen in vivo. Able to bind to platelet glycoprotein Ib alpha chain (GP1BA) receptor in vitro, although this interaction may have pathologically only limited effect in vivo as it is not able to abolish the von Willebrand factor (vWF)-dependent platelet agglutination induced by ristocetin. Does not affect blood coagulation. The protein is Disintegrin-like/cysteine-rich protein MPIII-3 of Vipera ammodytes ammodytes (Western sand viper).